Reading from the N-terminus, the 244-residue chain is Large ribosomal subunit protein uL30B (244 aa).

Residues Met1–Ser11 are compositionally biased toward polar residues. Positions Met1 to Lys21 are disordered.

The protein belongs to the universal ribosomal protein uL30 family. In terms of assembly, component of the large ribosomal subunit (LSU). Mature yeast ribosomes consist of a small (40S) and a large (60S) subunit. The 40S small subunit contains 1 molecule of ribosomal RNA (18S rRNA) and 33 different proteins (encoded by 57 genes). The large 60S subunit contains 3 rRNA molecules (25S, 5.8S and 5S rRNA) and 46 different proteins (encoded by 81 genes).

The protein resides in the cytoplasm. Component of the ribosome, a large ribonucleoprotein complex responsible for the synthesis of proteins in the cell. The small ribosomal subunit (SSU) binds messenger RNAs (mRNAs) and translates the encoded message by selecting cognate aminoacyl-transfer RNA (tRNA) molecules. The large subunit (LSU) contains the ribosomal catalytic site termed the peptidyl transferase center (PTC), which catalyzes the formation of peptide bonds, thereby polymerizing the amino acids delivered by tRNAs into a polypeptide chain. The nascent polypeptides leave the ribosome through a tunnel in the LSU and interact with protein factors that function in enzymatic processing, targeting, and the membrane insertion of nascent chains at the exit of the ribosomal tunnel. The polypeptide is Large ribosomal subunit protein uL30B (Saccharomyces cerevisiae (strain ATCC 204508 / S288c) (Baker's yeast)).